Reading from the N-terminus, the 162-residue chain is uncharacterized protein (162 aa).

It is found in the cytoplasm. It localises to the nucleus. This is an uncharacterized protein from Schizosaccharomyces pombe (strain 972 / ATCC 24843) (Fission yeast).